Reading from the N-terminus, the 120-residue chain is MFLLYEYDIFWTFLIISSLIPILAFFISGILAPISKGPEKLSSYESGIEPIGDAWLQFRIRYYMFALVFVVFDVETVFLYPWAMSFDILGVSVFIEALIFVLILIVGLVYAWRKGALEWS.

3 helical membrane-spanning segments follow: residues 14–34 (LIIS…LAPI), 64–84 (MFAL…PWAM), and 88–108 (ILGV…IVGL).

Belongs to the complex I subunit 3 family. In terms of assembly, NDH is composed of at least 16 different subunits, 5 of which are encoded in the nucleus.

The protein resides in the plastid. It is found in the chloroplast thylakoid membrane. The enzyme catalyses a plastoquinone + NADH + (n+1) H(+)(in) = a plastoquinol + NAD(+) + n H(+)(out). It catalyses the reaction a plastoquinone + NADPH + (n+1) H(+)(in) = a plastoquinol + NADP(+) + n H(+)(out). NDH shuttles electrons from NAD(P)H:plastoquinone, via FMN and iron-sulfur (Fe-S) centers, to quinones in the photosynthetic chain and possibly in a chloroplast respiratory chain. The immediate electron acceptor for the enzyme in this species is believed to be plastoquinone. Couples the redox reaction to proton translocation, and thus conserves the redox energy in a proton gradient. The protein is NAD(P)H-quinone oxidoreductase subunit 3, chloroplastic of Coffea arabica (Arabian coffee).